The chain runs to 150 residues: Globin-5 (150 aa).

Positions 11–150 (PLSAAEKTKI…MICILLRSAY (140 aa)) constitute a Globin domain. H74 and H106 together coordinate heme b.

The protein belongs to the globin family. In terms of assembly, monomer at high oxygen tension and high pH and dimeric at low oxygen tension and lower pH.

The sequence is that of Globin-5 from Petromyzon marinus (Sea lamprey).